Here is a 992-residue protein sequence, read N- to C-terminus: Disks large-associated protein 4 (992 aa).

The span at 1–20 (MKGLGDSRPRHLSDSLDPPH) shows a compositional bias: basic and acidic residues. Disordered stretches follow at residues 1-31 (MKGL…DRNP) and 154-226 (APSM…ASGL). Over residues 162-171 (GKVGGNGGKK) the composition is skewed to gly residues. Basic and acidic residues predominate over residues 172-194 (GVLEDGKGRRAKSKERAKAGEPK). Polar residues predominate over residues 199–208 (SNISGWWSSD). 2 positions are modified to phosphoserine: Ser-206 and Ser-207. Omega-N-methylarginine is present on Arg-290. 5 disordered regions span residues 342-435 (TTLL…SWEE), 527-665 (SVSL…RKLS), 677-751 (VPKE…GPRQ), 763-798 (SYGD…AQPG), and 915-992 (TPEK…QTRL). A phosphoserine mark is found at Ser-377, Ser-380, Ser-384, Ser-388, Ser-405, Ser-415, and Ser-421. A compositionally biased stretch (polar residues) spans 399–413 (LRATQQSLGEQSNPR). Positions 528 to 554 (VSLQSLSPPPSTGSLSNSRTLPSSSCL) are enriched in low complexity. The span at 576 to 591 (VTVQSSTESAQDTYLD) shows a compositional bias: polar residues. Phosphoserine is present on residues Ser-580, Ser-581, Ser-609, Ser-611, Ser-665, and Ser-744. Residues 600-620 (TSQSGLSNSSDSLDSSTRPPS) are compositionally biased toward low complexity. Position 915 is a phosphothreonine (Thr-915). Composition is skewed to basic and acidic residues over residues 915-925 (TPEKRKEEKKP) and 940-958 (VSRD…EARK). The segment covering 969–978 (VRQNSATESA) has biased composition (polar residues). Phosphoserine is present on Ser-973.

This sequence belongs to the SAPAP family. In terms of assembly, interacts with DLG1 and DLG4/PSD-95. In terms of tissue distribution, expressed in brain.

The protein resides in the membrane. Its function is as follows. May play a role in the molecular organization of synapses and neuronal cell signaling. Could be an adapter protein linking ion channel to the subsynaptic cytoskeleton. May induce enrichment of PSD-95/SAP90 at the plasma membrane. This is Disks large-associated protein 4 (Dlgap4) from Rattus norvegicus (Rat).